The sequence spans 488 residues: 5'-3' exonuclease PLD3 (488 aa).

The Cytoplasmic portion of the chain corresponds to 1–38; that stretch reads MKPKLMYQELKVPVEEPAGELPMNEIEAWKAAEKKARW. A helical; Signal-anchor for type II membrane protein membrane pass occupies residues 39-59; that stretch reads VLLVLILAVVGFGALMTQLFL. Residues 60 to 488 are Lumenal-facing; it reads WEYGDLHLFG…DSVGNACRLL (429 aa). 2 disulfide bridges follow: Cys-77-Cys-237 and Cys-81-Cys-235. 2 N-linked (GlcNAc...) asparagine glycosylation sites follow: Asn-97 and Asn-132. Residues 194-221 form the PLD phosphodiesterase 1 domain; the sequence is THGVLHTKFWVVDQTHFYLGSANMDWRS. Catalysis depends on residues His-199, Lys-201, and Asp-206. His-199 (proton donor) is an active-site residue. Phosphate-binding residues include His-199 and Lys-201. Residue Asn-216 coordinates phosphate. N-linked (GlcNAc...) asparagine glycosylation is found at Asn-234, Asn-282, and Asn-385. An intrachain disulfide couples Cys-364 to Cys-485. A PLD phosphodiesterase 2 domain is found at 409–435; it reads YARVNHNKYMVTERTTYIGTSNWSGSY. Residue His-414 participates in phosphate binding. The Nucleophile role is filled by His-414. Phe-436 serves as a coordination point for Mg(2+).

It belongs to the phospholipase D family. As to quaternary structure, homodimer. Interacts with APP. Post-translationally, N-glycosylated. In terms of processing, proteolytically processed to a soluble form that is stable within endosomes and lysosomes. During transport through the secretory pathway becomes proteolysed by cysteine proteases, thereby releasing a stable soluble lysosomal lumenal polypeptide, whereas the transmembrane-bound fragment is rapidly degraded. Its transport route to lysosomes involves ubiquitination and the ESCRT complex. Ubiquitinated. Ubiquitination mediates sorting into lysosomes.

Its subcellular location is the endoplasmic reticulum membrane. It is found in the lysosome lumen. The protein resides in the early endosome membrane. It localises to the late endosome membrane. The protein localises to the golgi apparatus membrane. Its subcellular location is the endosome membrane. The catalysed reaction is Exonucleolytic cleavage in the 5'- to 3'-direction to yield nucleoside 3'-phosphates.. The enzyme catalyses a 5'-end 5'-dephospho-ribonucleotidyl-ribonucleotide-RNA + H2O = a ribonucleoside 3'-phosphate + a 5'-end dephospho-ribonucleoside-RNA + H(+). It carries out the reaction a ribonucleoside 3'-phosphate-2'-3'-cyclophospho-GMP + H2O = a ribonucleoside 3'-phosphate + 2',3'-cyclophospho-GMP + H(+). It catalyses the reaction a 5'-end 5'-dephospho-2'-deoxyribonucleotidyl-2'-deoxyribonucleotide in single-stranded DNA + H2O = a 5'-end dephospho-2'-deoxyribonucleoside in single-stranded DNA + a 2'-deoxyribonucleoside 3'-phosphate + H(+). The catalysed reaction is a 5'-end 5'-phospho-2'-deoxyribonucleotide in single-stranded DNA + H2O = a 5'-end 5'-dephospho-2'-deoxyribonucleotide in single-stranded DNA + phosphate. The enzyme catalyses a 3-lyso-sn-glycero-1-phospho-(3'-acyl-1'-sn-glycerol) + a 1-acyl-sn-glycerol = a 3-acyl-sn-glycero-1-phospho-(3'-acyl-1'-sn-glycerol) + glycerol. It carries out the reaction 3-lyso-sn-glycero-1-phospho-(3'-(9Z-octadecenoyl)-1'-sn-glycerol) + 1-(9Z-octadecenoyl)-sn-glycerol = 3-(9Z-octadecenoyl)-sn-glycero-1-phospho-(3'-(9Z-octadecenoyl)-1'-sn-glycerol) + glycerol. Functionally, 5'-&gt;3' exonuclease that hydrolyzes the phosphodiester bond of single-stranded DNA (ssDNA) and RNA molecules to form nucleoside 3'-monophosphates and 5'-end 5'-hydroxy deoxyribonucleotide/ribonucleotide fragments. Partially redundant with PLD4, can cleave all four nucleotides displaying higher efficiency for ssDNA and RNA fragments initiated with uridine and guanosine residues and lower efficiency for cytidine-initiated substrates. As a result, it does not always degrade polynucleotides to the single nucleotide level, it can stall at specific sites sparing certain fragments from exonucleolytic degradation. Processes self and pathogenic ssDNA and RNA molecules that reach the endolysosomal compartment via phagocytosis or autophagy and may serve as 'danger' signals for recognition by innate immune receptors such as toll-like receptors (TLRs). Degrades mitochondrial CpG-rich ssDNA fragments to prevent TLR9 activation and autoinflammatory response, but it can cleave viral RNA to generate ligands for TLR7 activation and initiate antiviral immune responses. In plasmacytoid dendritic cells, it cooperates with endonuclease RNASET2 to release 2',3'-cyclic guanosine monophosphate (2',3'-cGMP), a potent stimulatory ligand for TLR7. Produces 2',3'-cGMPs and cytidine-rich RNA fragments that occupy TLR7 ligand-binding pockets and trigger a signaling-competent state. Can exert polynucleotide phosphatase activity toward 5'-phosphorylated ssDNA substrates although at a slow rate. Transphosphatidylase that catalyzes the exchange with R to S stereo-inversion of the glycerol moiety between (S,R)-lysophosphatidylglycerol (LPG) and monoacylglycerol (MAG) substrates to yield (S,S)-bis(monoacylglycero)phosphate (BMP). Can synthesize a variety of (S,S)-BMPs representing the main phospholipid constituent of lysosomal intralumenal vesicle (ILV) membranes that bind acid hydrolases for lipid degradation. Regulates the homeostasis and interorganellar communication of the endolysosomal system with an overall impact on cellular removal of dysfunctional organelles via autophagy as well as proper protein and lipid turnover. May play a role in myotube formation in response to ER stress. This chain is 5'-3' exonuclease PLD3 (Pld3), found in Rattus norvegicus (Rat).